A 1354-amino-acid polypeptide reads, in one-letter code: Ubiquitin carboxyl-terminal hydrolase 47 (1354 aa).

The span at 114–133 shows a compositional bias: polar residues; sequence EQPQLASDESGTADSSGLDD. The interval 114-139 is disordered; sequence EQPQLASDESGTADSSGLDDSTQEKF. The USP domain occupies 174–549; it reads VGLVNQAMTC…NAYMLMYRLK (376 aa). The Nucleophile role is filled by C183. Residues 408 to 438 form a disordered region; the sequence is DVEDEKSPQTDSCTDSGAENEGSCHSDQMSN. Residues 416–438 show a composition bias toward polar residues; that stretch reads QTDSCTDSGAENEGSCHSDQMSN. Residue H488 is the Proton acceptor of the active site. Positions 863–882 are enriched in polar residues; sequence LSLQQHQDGGNGDSSKSTEG. Disordered regions lie at residues 863–1004 and 1314–1335; these read LSLQ…ESGK and LAKK…SPRK. Basic and acidic residues predominate over residues 920 to 930; the sequence is PEERSDSDVNN. Positions 933–949 are enriched in low complexity; sequence STSSVDSDILSSSHSSD. Residues 977–986 show a composition bias toward basic and acidic residues; sequence KANDGKKETW. A compositionally biased stretch (acidic residues) spans 987-1000; the sequence is DTAEEDSGTDSEYD.

Belongs to the peptidase C19 family. USP47 subfamily.

The protein localises to the cytoplasm. It catalyses the reaction Thiol-dependent hydrolysis of ester, thioester, amide, peptide and isopeptide bonds formed by the C-terminal Gly of ubiquitin (a 76-residue protein attached to proteins as an intracellular targeting signal).. Its function is as follows. Ubiquitin-specific protease that specifically deubiquitinates monoubiquitinated DNA polymerase beta (polb), stabilizing polb thereby playing a role in base-excision repair (BER). This chain is Ubiquitin carboxyl-terminal hydrolase 47 (usp47), found in Xenopus tropicalis (Western clawed frog).